A 206-amino-acid chain; its full sequence is Peptidyl-tRNA hydrolase (206 aa).

Residue Tyr-19 coordinates tRNA. The active-site Proton acceptor is the His-24. TRNA contacts are provided by Tyr-70, Asn-72, and Asn-118.

It belongs to the PTH family. Monomer.

Its subcellular location is the cytoplasm. The enzyme catalyses an N-acyl-L-alpha-aminoacyl-tRNA + H2O = an N-acyl-L-amino acid + a tRNA + H(+). Its function is as follows. Hydrolyzes ribosome-free peptidyl-tRNAs (with 1 or more amino acids incorporated), which drop off the ribosome during protein synthesis, or as a result of ribosome stalling. Catalyzes the release of premature peptidyl moieties from peptidyl-tRNA molecules trapped in stalled 50S ribosomal subunits, and thus maintains levels of free tRNAs and 50S ribosomes. This Prochlorococcus marinus (strain MIT 9303) protein is Peptidyl-tRNA hydrolase.